The sequence spans 565 residues: Urocanate hydratase (565 aa).

NAD(+) is bound by residues 61–62 (GG), Gln139, 185–187 (GMG), Glu205, Arg210, 251–252 (NA), 272–276 (QTSAH), 282–283 (YL), and Tyr331. The active site involves Cys419. Positions 453–472 (LDSGSVASPNRETESMRDGS) are disordered. The span at 463 to 472 (RETESMRDGS) shows a compositional bias: basic and acidic residues. Gly501 provides a ligand contact to NAD(+).

The protein belongs to the urocanase family. NAD(+) is required as a cofactor.

It localises to the cytoplasm. It catalyses the reaction 4-imidazolone-5-propanoate = trans-urocanate + H2O. Its pathway is amino-acid degradation; L-histidine degradation into L-glutamate; N-formimidoyl-L-glutamate from L-histidine: step 2/3. Functionally, catalyzes the conversion of urocanate to 4-imidazolone-5-propionate. The polypeptide is Urocanate hydratase (Pseudomonas syringae pv. tomato (strain ATCC BAA-871 / DC3000)).